A 235-amino-acid polypeptide reads, in one-letter code: Claudin-15 (235 aa).

A topological domain (cytoplasmic) is located at residue Met1. A helical membrane pass occupies residues 2 to 24 (LVAVEIFGFFLTAVGLLMLGVTL). Topologically, residues 25 to 74 (AHSSWRVSTVHGNVITTNTIFENLWYSCATDSMGVHNCWEFPSMLALSGY) are extracellular. The cysteines at positions 52 and 62 are disulfide-linked. A helical membrane pass occupies residues 75 to 99 (IQACRALMITAILLGFLGLFLGMVG). Over 100 to 115 (LRCTNIGGLELSRKTK) the chain is Cytoplasmic. Ser111 carries the phosphoserine modification. Residues 116 to 140 (LAATAGALHILAGICGMVAVSWYAF) traverse the membrane as a helical segment. Residues 141-159 (NITRDFFNPLYAGTKYELG) are Extracellular-facing. Positions 146–147 (FF) are important for the formation of tight-junction strand-like structures. A helical transmembrane segment spans residues 160–182 (PALYLGWSACLLAILGGICLFSN). At 183–235 (CCCSRDRDPATGVQLPYKAPVIPAASLAARLPAAASDEEGDSSFGKYGKNAYV) the chain is on the cytoplasmic side. Phosphoserine occurs at positions 218 and 225.

Belongs to the claudin family. In terms of assembly, can form homo- and heteropolymeric tight junction strands. In terms of processing, palmitoylated.

Its subcellular location is the cell junction. It localises to the tight junction. The protein localises to the cell membrane. It catalyses the reaction Na(+)(in) = Na(+)(out). It carries out the reaction K(+)(in) = K(+)(out). The catalysed reaction is Cs(+)(in) = Cs(+)(out). The enzyme catalyses Rb(+)(in) = Rb(+)(out). It catalyses the reaction Li(+)(in) = Li(+)(out). It carries out the reaction NH4(+)(in) = NH4(+)(out). The catalysed reaction is methylamine(out) = methylamine(in). The enzyme catalyses H2O(in) = H2O(out). In terms of biological role, forms paracellular channels: polymerizes in tight junction strands with cation- and water-selective channels through the strands, conveying epithelial permeability in a process known as paracellular tight junction permeability. In intestinal epithelium, allows for sodium and water fluxes from the peritoneal side to the lumen of the intestine to regulate nutrient absorption and intestinal morphogenesis. The chain is Claudin-15 (CLDN15) from Bos taurus (Bovine).